A 241-amino-acid polypeptide reads, in one-letter code: Large ribosomal subunit protein uL2 (241 aa).

The interval 200 to 241 (AVDHPHGGGNRQHPGRPTTISRHAPAGRKVGSIAAKRTGKRR) is disordered.

It belongs to the universal ribosomal protein uL2 family. In terms of assembly, part of the 50S ribosomal subunit. Forms a bridge to the 30S subunit in the 70S ribosome.

One of the primary rRNA binding proteins. Required for association of the 30S and 50S subunits to form the 70S ribosome, for tRNA binding and peptide bond formation. It has been suggested to have peptidyltransferase activity; this is somewhat controversial. Makes several contacts with the 16S rRNA in the 70S ribosome. This chain is Large ribosomal subunit protein uL2, found in Methanosphaera stadtmanae (strain ATCC 43021 / DSM 3091 / JCM 11832 / MCB-3).